A 218-amino-acid chain; its full sequence is MSERVSEEPGLDKGDGAEECELDDPELKAIRMRVREMEEEAERLKGLSGQDKSIGVSPRPCMKLIHSKMTAGEYTEGPPRPLSAEEKKEIDKRSVYVGNVDYGGTAQDLEAHFSSCGSINRITILCDKFSGHPKGYAYIEFAERNSVDAAVTMDETVFRGRTIKVLPKRTNMPGISSTDRGGFRGRPRGNRGNYQRGQRPRGRPFRGCGRPGPLNHPY.

Over residues 1–16 (MSERVSEEPGLDKGDG) the composition is skewed to basic and acidic residues. Disordered regions lie at residues 1 to 26 (MSERVSEEPGLDKGDGAEECELDDPE) and 169 to 218 (RTNM…NHPY). Residues 93–170 (RSVYVGNVDY…RTIKVLPKRT (78 aa)) form the RRM domain. Residues 205–218 (FRGCGRPGPLNHPY) are compositionally biased toward low complexity.

The protein resides in the cytoplasm. Its function is as follows. Binds the poly(A) tail of mRNA. Unable to interact with the cap-binding complex and is therefore unlikely to be involved in translation initiation. This is Embryonic polyadenylate-binding protein 2-A (Pabpn1l-a) from Xenopus laevis (African clawed frog).